The sequence spans 54 residues: uncharacterized protein (54 aa).

Residues 23 to 35 are compositionally biased toward basic and acidic residues; the sequence is DVMQEGETAKELN. Positions 23 to 54 are disordered; that stretch reads DVMQEGETAKELNYEGEDMQATSSAQNRQTSV. A compositionally biased stretch (polar residues) spans 42–54; that stretch reads QATSSAQNRQTSV.

This is an uncharacterized protein from Bacillus subtilis (strain 168).